The following is a 589-amino-acid chain: Arginine--tRNA ligase (589 aa).

The 'HIGH' region motif lies at 132 to 142 (PNTNKPLHVGH).

Belongs to the class-I aminoacyl-tRNA synthetase family. Monomer.

It is found in the cytoplasm. It carries out the reaction tRNA(Arg) + L-arginine + ATP = L-arginyl-tRNA(Arg) + AMP + diphosphate. The sequence is that of Arginine--tRNA ligase from Treponema pallidum subsp. pallidum (strain SS14).